A 479-amino-acid polypeptide reads, in one-letter code: Long-chain alcohol oxidase (479 aa).

The FAD-binding PCMH-type domain occupies 14–183; the sequence is QILRPSAAYT…LAVRIRCREQ (170 aa). Pros-8alpha-FAD histidine is present on His49. FAD is bound by residues Thr113, Gly116, 120-123, and Ile173; that span reads TGTH. Residues 241–258 traverse the membrane as a helical segment; that stretch reads LYWLGTMDYGLILQILFL. FAD is bound by residues Arg369 and His425.

Belongs to the oxygen-dependent FAD-linked oxidoreductase family. Requires FAD as cofactor.

It localises to the cell membrane. The catalysed reaction is a long-chain primary fatty alcohol + O2 = a long-chain fatty aldehyde + H2O2. It catalyses the reaction dodecan-1-ol + O2 = dodecanal + H2O2. It carries out the reaction tetradecan-1-ol + O2 = tetradecanal + H2O2. The enzyme catalyses octan-1-ol + O2 = octanal + H2O2. The catalysed reaction is decan-1-ol + O2 = decanal + H2O2. It functions in the pathway lipid metabolism; fatty acid metabolism. In terms of biological role, in vitro catalyzes the oxidation of a range of fatty alcohols having a carbon chain length of six and above, with a reduction of O2 to H2O2. Shows the highest activity with 1-dodecanol. Is likely involved in lipid metabolism. In Uncultured marine euryarchaeote, this protein is Long-chain alcohol oxidase.